The following is a 397-amino-acid chain: MIIMVTEVDVLVIGAGPAGSTAAKHAALGGADVLLIDKKSEIGAPKRCAEGVSIGGLESLGIEPNPRWITKKLDGVRMVSPNGTDVWLTSDKVELPEAGYILERKVFDKFMAMDAARAGSRIMVKTIATGMERTDDGYLVSAECMGEKFEIKARIVIAADGPESRVARWAGLNTATRPKDMESAAQFEMVGVEMEDNNCIEFYFGSVAPGGYALDIPEGDDIANVGLGVLSTETDKSAYEHLLEFVESCPATRNAQPVELNIGGDPVGGMPKKLVADSLMVVGDAAGQVNPLTGGGIISGMKGGMLAGQVAAAAVSEGDVTARRLGEYERLCREEIGDEISKYLKVKEYLLTLSDSELDSIAEAFQDVEFEKVSTTELVKKLIKVSPKALLKLGKLF.

FAD is bound by residues Ala-18, Asp-37, Cys-48, Ala-49, Gly-51, Arg-104, Ala-128, Asp-284, Gly-296, and Ile-297.

It belongs to the geranylgeranyl reductase family. DGGGPL reductase subfamily. Requires FAD as cofactor.

It catalyses the reaction a 2,3-bis-O-phytanyl-sn-glycerol 1-phospholipid + 8 A = a 2,3-bis-O-(geranylgeranyl)-sn-glycerol 1-phospholipid + 8 AH2. The enzyme catalyses 2,3-bis-O-(phytanyl)-sn-glycerol 1-phosphate + 8 A = 2,3-bis-O-(geranylgeranyl)-sn-glycerol 1-phosphate + 8 AH2. The catalysed reaction is CDP-2,3-bis-O-(geranylgeranyl)-sn-glycerol + 8 AH2 = CDP-2,3-bis-O-(phytanyl)-sn-glycerol + 8 A. It carries out the reaction archaetidylserine + 8 AH2 = 2,3-bis-O-phytanyl-sn-glycero-3-phospho-L-serine + 8 A. It functions in the pathway membrane lipid metabolism; glycerophospholipid metabolism. In terms of biological role, is involved in the reduction of 2,3-digeranylgeranylglycerophospholipids (unsaturated archaeols) into 2,3-diphytanylglycerophospholipids (saturated archaeols) in the biosynthesis of archaeal membrane lipids. Catalyzes the formation of archaetidic acid (2,3-di-O-phytanyl-sn-glyceryl phosphate) from 2,3-di-O-geranylgeranylglyceryl phosphate (DGGGP) via the hydrogenation of each double bond of the isoprenoid chains. Is also probably able to reduce double bonds of geranyl groups in CDP-2,3-bis-O-(geranylgeranyl)-sn-glycerol and archaetidylserine, thus acting at various stages in the biosynthesis of archaeal membrane lipids. The chain is Digeranylgeranylglycerophospholipid reductase 1 from Methanothermobacter thermautotrophicus (strain ATCC 29096 / DSM 1053 / JCM 10044 / NBRC 100330 / Delta H) (Methanobacterium thermoautotrophicum).